Consider the following 223-residue polypeptide: Golgi SNAP receptor complex member 1-1 (223 aa).

The Cytoplasmic segment spans residues 1 to 201 (MDVPSSWDAL…AAIKRKKSMD (201 aa)). The stretch at 8-67 (DALRKQARKIEAQLDEQMHSYRRLVSTKALSKSDGNESDLEAGIDLLLRQLQQVNAQMQA) forms a coiled coil. The helical; Anchor for type IV membrane protein transmembrane segment at 202 to 222 (TIILSLVAAVCTFLIFIYWIT) threads the bilayer. Position 223 (lysine 223) is a topological domain, vesicular.

It belongs to the GOSR1 family. In terms of assembly, component of several multiprotein Golgi SNARE complexes.

It localises to the golgi apparatus membrane. Involved in transport from the ER to the Golgi apparatus as well as in intra-Golgi transport. It belongs to a super-family of proteins called t-SNAREs or soluble NSF (N-ethylmaleimide-sensitive factor) attachment protein receptor. This chain is Golgi SNAP receptor complex member 1-1 (GOS11), found in Arabidopsis thaliana (Mouse-ear cress).